Consider the following 569-residue polypeptide: Santalene synthase (569 aa).

The (2E)-geranyl diphosphate site is built by Arg-284, Asp-321, Asp-325, and Arg-460. Mg(2+) is bound by residues Asp-321 and Asp-325. The short motif at 321-325 (DDAYD) is the DDXXD motif element. Mg(2+)-binding residues include Asn-463, Thr-467, and Glu-471.

This sequence belongs to the terpene synthase family. Tpsb subfamily. Mg(2+) serves as cofactor. Requires Mn(2+) as cofactor.

The enzyme catalyses (2E,6E)-farnesyl diphosphate = (1S,5S,6R)-alpha-bergamotene + diphosphate. It carries out the reaction (2E,6E)-farnesyl diphosphate = (+)-alpha-santalene + diphosphate. The catalysed reaction is (2E,6E)-farnesyl diphosphate = (-)-beta-santalene + diphosphate. Its function is as follows. Catalyzes a mixture of sesquiterpenoids from (2E,6E)-farnesyl diphosphate in fragrance biosynthesis. Catalyzes the formation of alpha-santalene, beta-santalene, epi-beta-santalene and exo-alpha-bergamotene, as well as traces of alpha-farnesene and beta-farnesene. This chain is Santalene synthase, found in Santalum austrocaledonicum (Sandalwood).